A 224-amino-acid polypeptide reads, in one-letter code: 7-cyano-7-deazaguanine synthase (224 aa).

An ATP-binding site is contributed by 12-22 (LSGGLDSSTVT). 4 residues coordinate Zn(2+): Cys193, Cys201, Cys204, and Cys207.

Belongs to the QueC family. Requires Zn(2+) as cofactor.

The catalysed reaction is 7-carboxy-7-deazaguanine + NH4(+) + ATP = 7-cyano-7-deazaguanine + ADP + phosphate + H2O + H(+). It participates in purine metabolism; 7-cyano-7-deazaguanine biosynthesis. Its function is as follows. Catalyzes the ATP-dependent conversion of 7-carboxy-7-deazaguanine (CDG) to 7-cyano-7-deazaguanine (preQ(0)). This chain is 7-cyano-7-deazaguanine synthase, found in Prochlorococcus marinus (strain MIT 9312).